The primary structure comprises 213 residues: Ribosomal RNA small subunit methyltransferase G (213 aa).

S-adenosyl-L-methionine is bound by residues Gly77, Phe82, 130 to 131, and Arg146; that span reads IE.

This sequence belongs to the methyltransferase superfamily. RNA methyltransferase RsmG family.

The protein resides in the cytoplasm. It catalyses the reaction guanosine(527) in 16S rRNA + S-adenosyl-L-methionine = N(7)-methylguanosine(527) in 16S rRNA + S-adenosyl-L-homocysteine. Functionally, specifically methylates the N7 position of guanine in position 527 of 16S rRNA. The protein is Ribosomal RNA small subunit methyltransferase G of Bartonella tribocorum (strain CIP 105476 / IBS 506).